We begin with the raw amino-acid sequence, 151 residues long: Small ribosomal subunit protein bS6 (151 aa).

The tract at residues 97–151 (EAEPSAMMQKRDRDDRKDRDRGDRPRRRDDDFGGGDRGDRGDRGDRPERNFGGEN) is disordered. A compositionally biased stretch (basic and acidic residues) spans 105 to 151 (QKRDRDDRKDRDRGDRPRRRDDDFGGGDRGDRGDRGDRPERNFGGEN).

This sequence belongs to the bacterial ribosomal protein bS6 family.

Functionally, binds together with bS18 to 16S ribosomal RNA. The protein is Small ribosomal subunit protein bS6 of Methylorubrum populi (strain ATCC BAA-705 / NCIMB 13946 / BJ001) (Methylobacterium populi).